Consider the following 840-residue polypeptide: Transient receptor potential cation channel subfamily V member 1 (840 aa).

Low complexity predominate over residues 1–12; it reads MKNWGSSDSGGS. The tract at residues 1–43 is disordered; that stretch reads MKNWGSSDSGGSEDPPQEDSCLDPLDGDPNSRPVPAKPHIFPT. Residues 1–433 lie on the Cytoplasmic side of the membrane; it reads MKNWGSSDSG…QDKWDRFVKR (433 aa). ANK repeat units lie at residues 111-139 and 154-186; these read KLYD…FLQK and TGKT…QTDS. Residues Arg116, Lys156, Lys161, Asn165, 200–203, and 211–212 each bind ATP; these read YKGQ and ER. 4 ANK repeats span residues 204–229, 250–277, 286–322, and 336–359; these read TALH…ADVQ, ELPL…QPAD, NTVL…KLHP, and TPLA…REIQ. The residue at position 371 (Thr371) is a Phosphothreonine; by PKA; in vitro. Residues 394–416 form an ANK 7 repeat; sequence NSVLEVIAYSSSETPNRHDMLLV. Residues 434–455 traverse the membrane as a helical segment; it reads IFYFNFFIYCLYMIIFTTAAYY. The Extracellular segment spans residues 456–473; the sequence is RPVDGLPPYKLKHTVGDY. A helical membrane pass occupies residues 474–498; the sequence is FRVTGEILSVLGGVYFFFRGIQYFL. The Cytoplasmic portion of the chain corresponds to 499–511; the sequence is QRRPSLKTLFVDS. Ser503 carries the phosphoserine; by PKC/PRKCE modification. Residue 512 to 513 participates in resiniferatoxin binding; that stretch reads YS. A helical membrane pass occupies residues 512–533; that stretch reads YSEMLFFVQSLFMLGTVVLYFC. The Extracellular portion of the chain corresponds to 534-536; it reads HHK. Residues 537-557 form a helical membrane-spanning segment; that stretch reads EYVASMVFSLAMGWTNMLYYT. Resiniferatoxin-binding residues include Thr551 and Arg558. The Cytoplasmic segment spans residues 558–560; sequence RGF. Residues 561 to 599 form a helical membrane-spanning segment; the sequence is QQMGIYAVMIEKMILRDLCRFMFVYLVFLFGFSTAVVTL. Residues 600–631 lie on the Extracellular side of the membrane; sequence IEDGKNNSVPTESTLHRWRGPGCRPPDSSYNS. An N-linked (GlcNAc...) asparagine glycan is attached at Asn605. An intramembrane region (pore-forming) is located at residues 632–653; sequence LYSTCLELFKFTIGMGDLEFTE. Gly645 is a Na(+) binding site. Residues 645 to 648 carry the Selectivity filter motif; that stretch reads GMGD. Residue Asp648 participates in Ca(2+) binding. Over 654 to 657 the chain is Extracellular; it reads NYDF. The chain crosses the membrane as a helical span at residues 658–684; that stretch reads KAVFIILLLAYVILTYILLLNMLIALM. Residues 685–840 are Cytoplasmic-facing; the sequence is GETVNKIAQE…FKDPVGLGEK (156 aa). The segment at 686–714 is AD; that stretch reads ETVNKIAQESKNIWKLQRAITILDTEKSF. A Phosphothreonine modification is found at Thr706. Residues 769-803 are interaction with calmodulin; sequence EGIKRTLSFSLRSGRVSGRNWKNFSLVPLLRDAST. Phosphoserine is present on Ser776. Residues 779–794 are required for PIP2-mediated channel inhibition; the sequence is LRSGRVSGRNWKNFSL. Residue Ser802 is modified to Phosphoserine; by PKC/PRKCE and PKC/PRKCZ. A Phosphoserine modification is found at Ser822.

This sequence belongs to the transient receptor (TC 1.A.4) family. TrpV subfamily. TRPV1 sub-subfamily. Homotetramer. Interacts with PIRT. May also form a heteromeric channel with TRPV3. Interacts with CALM, PRKCM and CSK. Interacts with PRKCG and NTRK1, probably by forming a trimeric complex. Interacts with the Scolopendra mutilans RhTx toxin. Interacts with TMEM100. Interacts with PACS2. Phosphorylation by PKA reverses capsaicin-induced dephosphorylation at multiple sites. Phosphorylation by CAMKII seems to regulate binding to vanilloids. Phosphorylated and modulated by PRKCE, PRKCM and probably PRKCZ. Dephosphorylation by calcineurin seems to lead to receptor desensitization and phosphorylation by CAMKII recovers activity.

It is found in the postsynaptic cell membrane. The protein resides in the cell projection. Its subcellular location is the dendritic spine membrane. The protein localises to the cell membrane. It catalyses the reaction Ca(2+)(in) = Ca(2+)(out). It carries out the reaction Mg(2+)(in) = Mg(2+)(out). The enzyme catalyses Na(+)(in) = Na(+)(out). The catalysed reaction is K(+)(in) = K(+)(out). Channel activity is activated via the interaction with PIRT and phosphatidylinositol 4,5-bisphosphate (PIP2). Both PIRT and PIP2 are required to activate channel activity. The channel is sensitized by ATP binding. Repeated stimulation with capsaicin gives rise to progressively smaller responses, due to desensitization. This desensitization is triggered by the influx of calcium ions and is inhibited by elevated ATP levels. Ca(2+) and CALM displace ATP from its binding site and trigger a conformation change that leads to a closed, desensitized channel. Intracellular PIP2 inhibits desensitization. The double-knot toxin (DkTx) from the Chinese earth tiger tarantula activates the channel and traps it in an open conformation. The Scolopendra mutilans RhTx toxin potentiates the heat activation pathway mediated by this channel by binding to the charge-rich outer pore region (in an activated state). Non-selective calcium permeant cation channel involved in detection of noxious chemical and thermal stimuli. Seems to mediate proton influx and may be involved in intracellular acidosis in nociceptive neurons. Involved in mediation of inflammatory pain and hyperalgesia. Sensitized by a phosphatidylinositol second messenger system activated by receptor tyrosine kinases, which involves PKC isozymes and PCL. Activated by vanilloids, like capsaicin, and temperatures higher than 42 degrees Celsius. Upon activation, exhibits a time- and Ca(2+)-dependent outward rectification, followed by a long-lasting refractory state. Mild extracellular acidic pH (6.5) potentiates channel activation by noxious heat and vanilloids, whereas acidic conditions (pH &lt;6) directly activate the channel. Can be activated by endogenous compounds, including 12-hydroperoxytetraenoic acid and bradykinin. Acts as ionotropic endocannabinoid receptor with central neuromodulatory effects. Triggers a form of long-term depression (TRPV1-LTD) mediated by the endocannabinoid anandamine in the hippocampus and nucleus accumbens by affecting AMPA receptors endocytosis. This is Transient receptor potential cation channel subfamily V member 1 (TRPV1) from Canis lupus familiaris (Dog).